The following is a 615-amino-acid chain: Afadin- and alpha-actinin-binding protein (615 aa).

2 coiled-coil regions span residues 126-227 (KLGS…IAMD) and 266-293 (RQKQILMENAELKKVLQQMKKEMISLLS). Residues Ser-290, Ser-293, Ser-313, and Ser-319 each carry the phosphoserine modification. The interval 293-316 (SPQKKKPRERAEDGTGTVAISDIE) is disordered. A coiled-coil region spans residues 375–461 (ISRQDHEQET…RSFTEAAIRL (87 aa)). Ser-537, Ser-541, and Ser-543 each carry phosphoserine. Residues 567–615 (PEESKPSEVARESTDQKWSVQSRPSSREGCYSGCSSAFRSAHGDRDDLP) are disordered. Over residues 568-581 (EESKPSEVARESTD) the composition is skewed to basic and acidic residues.

This sequence belongs to the ADIP family. In terms of assembly, interacts with SSX2 and SSX3. Does not interact with SSX1 and SSX4. Interacts with afadin and alpha-actinin. Interacts with VAV2. Interacts with PCM1. Interacts with WRAP73. As to expression, widely expressed.

The protein resides in the cell junction. It is found in the adherens junction. The protein localises to the nucleus. Its subcellular location is the cytoplasm. It localises to the cytoskeleton. The protein resides in the microtubule organizing center. It is found in the centrosome. The protein localises to the centriolar satellite. Its subcellular location is the cilium basal body. Functionally, belongs to an adhesion system, which plays a role in the organization of homotypic, interneuronal and heterotypic cell-cell adherens junctions (AJs). May connect the nectin-afadin and E-cadherin-catenin system through alpha-actinin and may be involved in organization of the actin cytoskeleton at AJs through afadin and alpha-actinin. Acts as a centrosome maturation factor, probably by maintaining the integrity of the pericentriolar material and proper microtubule nucleation at mitotic spindle poles. The function seems to implicate at least in part WRAP73; the SSX2IP:WRAP73 complex is proposed to act as regulator of spindle anchoring at the mitotic centrosome. Involved in cell movement: localizes at the leading edge of moving cells in response to PDGF and is required for the formation of the leading edge and the promotion of cell movement, possibly via activation of Rac signaling. Involved in ciliogenesis. It is required for targeted recruitment of the BBSome, CEP290, RAB8, and SSTR3 to the cilia. The protein is Afadin- and alpha-actinin-binding protein (Ssx2ip) of Mus musculus (Mouse).